The primary structure comprises 282 residues: Elongation factor Ts (282 aa).

An involved in Mg(2+) ion dislocation from EF-Tu region spans residues 79 to 82 (TDFV).

Belongs to the EF-Ts family.

Its subcellular location is the cytoplasm. Associates with the EF-Tu.GDP complex and induces the exchange of GDP to GTP. It remains bound to the aminoacyl-tRNA.EF-Tu.GTP complex up to the GTP hydrolysis stage on the ribosome. In Shewanella piezotolerans (strain WP3 / JCM 13877), this protein is Elongation factor Ts.